A 380-amino-acid polypeptide reads, in one-letter code: MGIHGLAKLIADHAPGAIKEQDIKNYFGRKIAIDASMCIYQFLIAVRQDGNVLQSEDGETTSHLMGMFYRTIRMLENGIKPVYVFDGKPPQLKSAELEKRGERRAEAEKMLAKAQELGEQENIDKFSKRLVKVTKQHNDDCKKLLTLMGVPYIEAPCEAEASCAALVKEGKVFATATEDMDGLTFGTNVLLRHLTASEAKKLPVQEFHFNRILQDIGLTSEQFIDLCILLGCDYCGTIKGIGPKRAIDLIRQHGSIEEILENIDTSKHPAPEDWLYKEARNLFLKPEVVDSSTVDLKWREPDEEALIQFMCSEKQFSEDRIRNGCKKMMKSRQGSTQGRLDSFFSVTGSLSSKRKEPETKGSAKKKQKTGATPGKFRKGK.

The N-domain stretch occupies residues 1–104; that stretch reads MGIHGLAKLI…AELEKRGERR (104 aa). Mg(2+) is bound at residue aspartate 34. DNA-binding residues include arginine 47 and arginine 70. The Mg(2+) site is built by aspartate 86, glutamate 158, glutamate 160, aspartate 179, and aspartate 181. The I-domain stretch occupies residues 122-253; that stretch reads NIDKFSKRLV…KRAIDLIRQH (132 aa). Residue glutamate 158 participates in DNA binding. Glycine 231 and aspartate 233 together coordinate DNA. Position 233 (aspartate 233) interacts with Mg(2+). Positions 327–380 are disordered; that stretch reads KMMKSRQGSTQGRLDSFFSVTGSLSSKRKEPETKGSAKKKQKTGATPGKFRKGK. Residues 332 to 351 are compositionally biased toward polar residues; sequence RQGSTQGRLDSFFSVTGSLS. Positions 336–344 are interaction with PCNA; that stretch reads TQGRLDSFF.

The protein belongs to the XPG/RAD2 endonuclease family. FEN1 subfamily. Interacts with PCNA. Three molecules of fen1 bind to one PCNA trimer with each molecule binding to one PCNA monomer. PCNA stimulates the nuclease activity without altering cleavage specificity. It depends on Mg(2+) as a cofactor. In terms of processing, phosphorylated. Phosphorylation upon DNA damage induces relocalization to the nuclear plasma.

The protein localises to the nucleus. Its subcellular location is the nucleolus. It is found in the nucleoplasm. It localises to the mitochondrion. Functionally, structure-specific nuclease with 5'-flap endonuclease and 5'-3' exonuclease activities involved in DNA replication and repair. During DNA replication, cleaves the 5'-overhanging flap structure that is generated by displacement synthesis when DNA polymerase encounters the 5'-end of a downstream Okazaki fragment. It enters the flap from the 5'-end and then tracks to cleave the flap base, leaving a nick for ligation. Also involved in the long patch base excision repair (LP-BER) pathway, by cleaving within the apurinic/apyrimidinic (AP) site-terminated flap. Acts as a genome stabilization factor that prevents flaps from equilibrating into structures that lead to duplications and deletions. Also possesses 5'-3' exonuclease activity on nicked or gapped double-stranded DNA, and exhibits RNase H activity. Also involved in replication and repair of rDNA and in repairing mitochondrial DNA. In Xiphophorus maculatus (Southern platyfish), this protein is Flap endonuclease 1 (fen1).